A 625-amino-acid chain; its full sequence is Protein arginine N-methyltransferase skb1 (625 aa).

Residues 280-588 form the SAM-dependent MTase PRMT-type domain; the sequence is LQVPLQPLSY…WRLTDGMRVW (309 aa). Residues Y296, 305-306, E359, and 386-387 each bind S-adenosyl-L-methionine; these read KY and DM. Catalysis depends on proton donor/acceptor residues E402 and E411.

This sequence belongs to the class I-like SAM-binding methyltransferase superfamily. Protein arginine N-methyltransferase family. As to quaternary structure, interacts with the N-terminal regulatory domain of shk1. Shk1, cdc42 and skb1 are able to form a ternary complex in vivo. Interacts with orb6. Interacts with Cdr1 and the Cdr1 inhibitory target Wee1.

The protein resides in the nucleus. It localises to the cell tip. It is found in the cell septum. Its subcellular location is the cytoplasm. The protein localises to the cell cortex. Its function is as follows. S-adenosyl-L-methionine-dependent protein-arginine N-methyltransferase that can catalyze both the mono- and symmetric (type II) dimethylation of the guanidino nitrogens of arginine residues in target proteins. Delays mitotic entry by inhibiting the Cdr1-Wee1 signaling pathway. Cortical nodes sequester Skb1 from its regulatory targets Cdr1 and Wee1. Positively modulates the shk1 kinase function. May be a mediator of hyperosmotic stress response. Involved in the control of cell polarity by regulating the subcellular localization of Orb6 kinase. In Schizosaccharomyces pombe (strain 972 / ATCC 24843) (Fission yeast), this protein is Protein arginine N-methyltransferase skb1.